A 183-amino-acid polypeptide reads, in one-letter code: Caltractin ICL1f (183 aa).

Over residues 1–19 (MARRGQQPPQQQQQAQPAQ) the composition is skewed to low complexity. Positions 1–30 (MARRGQQPPQQQQQAQPAQKNQAGKFNPAE) are disordered. EF-hand domains follow at residues 39–74 (EEVL…LGFE), 75–110 (AKNQ…RISE), 112–147 (DSKA…LGET), and 148–183 (MDDS…KTFA). Ca(2+) contacts are provided by Asp-52, Asp-54, Thr-56, Ser-58, Glu-63, Asp-88, Asp-90, Ser-92, Gln-94, and Glu-99.

This sequence belongs to the centrin family. As to quaternary structure, monomer.

Its subcellular location is the cytoplasm. The protein resides in the cytoskeleton. Its function is as follows. Plays a fundamental role in microtubule organizing center structure and function. Component of the infraciliary lattice (ICL) and the ciliary basal bodies. This is Caltractin ICL1f (Icl1f) from Paramecium tetraurelia.